Reading from the N-terminus, the 163-residue chain is Small ribosomal subunit protein uS9 (163 aa).

Positions methionine 1–threonine 41 are disordered. Over residues threonine 18–glycine 38 the composition is skewed to low complexity.

This sequence belongs to the universal ribosomal protein uS9 family.

This chain is Small ribosomal subunit protein uS9, found in Bifidobacterium adolescentis (strain ATCC 15703 / DSM 20083 / NCTC 11814 / E194a).